Here is a 346-residue protein sequence, read N- to C-terminus: N-acetyl-gamma-glutamyl-phosphate reductase (346 aa).

Cysteine 149 is a catalytic residue.

Belongs to the NAGSA dehydrogenase family. Type 1 subfamily.

The protein localises to the cytoplasm. It catalyses the reaction N-acetyl-L-glutamate 5-semialdehyde + phosphate + NADP(+) = N-acetyl-L-glutamyl 5-phosphate + NADPH + H(+). Its pathway is amino-acid biosynthesis; L-arginine biosynthesis; N(2)-acetyl-L-ornithine from L-glutamate: step 3/4. Functionally, catalyzes the NADPH-dependent reduction of N-acetyl-5-glutamyl phosphate to yield N-acetyl-L-glutamate 5-semialdehyde. The protein is N-acetyl-gamma-glutamyl-phosphate reductase of Desulfotalea psychrophila (strain LSv54 / DSM 12343).